A 191-amino-acid chain; its full sequence is ATP synthase subunit b 2 (191 aa).

Over residues 1-12 (MAESHGEAKGGE) the composition is skewed to basic and acidic residues. The segment at 1 to 31 (MAESHGEAKGGEAKGTASAHTEAEGGHGFPP) is disordered. The helical transmembrane segment at 38-60 (PSQIASLVIAFVALYVIVSRVAL) threads the bilayer.

Belongs to the ATPase B chain family. F-type ATPases have 2 components, F(1) - the catalytic core - and F(0) - the membrane proton channel. F(1) has five subunits: alpha(3), beta(3), gamma(1), delta(1), epsilon(1). F(0) has three main subunits: a(1), b(2) and c(10-14). The alpha and beta chains form an alternating ring which encloses part of the gamma chain. F(1) is attached to F(0) by a central stalk formed by the gamma and epsilon chains, while a peripheral stalk is formed by the delta and b chains.

It is found in the cell inner membrane. In terms of biological role, f(1)F(0) ATP synthase produces ATP from ADP in the presence of a proton or sodium gradient. F-type ATPases consist of two structural domains, F(1) containing the extramembraneous catalytic core and F(0) containing the membrane proton channel, linked together by a central stalk and a peripheral stalk. During catalysis, ATP synthesis in the catalytic domain of F(1) is coupled via a rotary mechanism of the central stalk subunits to proton translocation. Functionally, component of the F(0) channel, it forms part of the peripheral stalk, linking F(1) to F(0). The b'-subunit is a diverged and duplicated form of b found in plants and photosynthetic bacteria. This Bradyrhizobium sp. (strain ORS 278) protein is ATP synthase subunit b 2 (atpF2).